Reading from the N-terminus, the 38-residue chain is Odorant-binding protein 2 (38 aa).

The protein belongs to the calycin superfamily. Lipocalin family. As to expression, nasal mucosa.

It localises to the secreted. It is found in the extracellular space. Functionally, this soluble protein may play a specific role in odor discrimination and perception. In Hystrix cristata (North African crested porcupine), this protein is Odorant-binding protein 2.